The sequence spans 542 residues: MAQKKAVTVKGKKATNGEEKPLAKRVTKSTKVQEEETVVPQSPSKKSRKQPVKEVPQFSEEDESDVEEQNDEQPGDDSDFETEEAAGLIDDEAEEDEEYNSDDEEDDDDDELEPGEVSKSEGADEVDESDDDEEAPVEKPVSKKSEKANSEKSEENRGIPKVKVGKIPLGTPKNQIVFVTNLPNEYLHKDLVALFAKFGRLSALQRFTNLNGNKSVLIAFDTSTGAEAVLQAKPKALTLGDNVLSVSQPRNKEENNERTVVVGLIGPNITKDDLKTFFEKVAPVEAVTISSNRLMPRAFVRLASVDDIPKALKLHSTELFSRFITVRRISQESISRTSELTLVVENVGKHESYSSDALEKIFKKFGDVEEIDVVCSKAVLAFVTFKQSDAATKALAQLDGKTVNKFEWKLHRFERSTSGRAILVTNLTSDATEADLRKVFNDSGEIESIIMLGQKAVVKFKDDEGFCKSFLANESIVNNAPIFIEPNSLLKHRLLKKRLAIGQTRAPRKFQKDTKPNFGKKPFNKRPAQENGGKSFVKRARF.

Residues 1–166 are disordered; sequence MAQKKAVTVK…RGIPKVKVGK (166 aa). Phosphoserine occurs at positions 42 and 44. The span at 59-114 shows a compositional bias: acidic residues; that stretch reads SEEDESDVEEQNDEQPGDDSDFETEEAAGLIDDEAEEDEEYNSDDEEDDDDDELEP. Ser120, Ser129, and Ser142 each carry phosphoserine. Residues 123–135 show a composition bias toward acidic residues; sequence ADEVDESDDDEEA. The span at 136-158 shows a compositional bias: basic and acidic residues; sequence PVEKPVSKKSEKANSEKSEENRG. RRM domains follow at residues 175-251, 258-331, 340-429, and 420-489; these read QIVF…QPRN, RTVV…RISQ, LTLV…NLTS, and RAIL…PNSL. Ser304 is modified (phosphoserine). Ser330 carries the phosphoserine; by PKA modification. Residue Ser443 is modified to Phosphoserine. The segment at 505–542 is disordered; sequence RAPRKFQKDTKPNFGKKPFNKRPAQENGGKSFVKRARF.

The N-terminus is blocked.

The protein resides in the nucleus. Its function is as follows. Its capacity to bind DNA and protein(s), and its differential expression during development suggest a role in the regulation of gene expression during Drosophila development. It could, in interaction with other factors, be required for the translation of instructions provided by pattern forming genes and controls, via chromatin changes, the activity of genes critical for the process of morphogenesis of several embryonic territories. The protein is DNA-binding protein modulo (mod) of Drosophila melanogaster (Fruit fly).